A 301-amino-acid polypeptide reads, in one-letter code: Acetyl-coenzyme A carboxylase carboxyl transferase subunit beta (301 aa).

In terms of domain architecture, CoA carboxyltransferase N-terminal spans 29 to 298 (LWVKCPETGQ…AEPAEEEAEP (270 aa)).

The protein belongs to the AccD/PCCB family. As to quaternary structure, acetyl-CoA carboxylase is a heterohexamer composed of biotin carboxyl carrier protein (AccB), biotin carboxylase (AccC) and two subunits each of ACCase subunit alpha (AccA) and ACCase subunit beta (AccD).

Its subcellular location is the cytoplasm. The catalysed reaction is N(6)-carboxybiotinyl-L-lysyl-[protein] + acetyl-CoA = N(6)-biotinyl-L-lysyl-[protein] + malonyl-CoA. Its pathway is lipid metabolism; malonyl-CoA biosynthesis; malonyl-CoA from acetyl-CoA: step 1/1. Its function is as follows. Component of the acetyl coenzyme A carboxylase (ACC) complex. Biotin carboxylase (BC) catalyzes the carboxylation of biotin on its carrier protein (BCCP) and then the CO(2) group is transferred by the transcarboxylase to acetyl-CoA to form malonyl-CoA. The polypeptide is Acetyl-coenzyme A carboxylase carboxyl transferase subunit beta (Methylobacterium nodulans (strain LMG 21967 / CNCM I-2342 / ORS 2060)).